Reading from the N-terminus, the 98-residue chain is Putative protein adenylyltransferase MJ1217 (98 aa).

A GSX(10)DXD motif motif is present at residues 31 to 45 (GSYAREEQKETSDID). Residues Asp-43, Asp-45, and Asp-75 each contribute to the Mg(2+) site.

This sequence belongs to the MntA antitoxin family. As to quaternary structure, probably forms a complex with cognate toxin MJ1216. The cofactor is Mg(2+).

The catalysed reaction is L-tyrosyl-[protein] + ATP = O-(5'-adenylyl)-L-tyrosyl-[protein] + diphosphate. The enzyme catalyses O-(5'-adenylyl)-L-tyrosyl-[protein] + ATP = O-[5'-(adenylyl-(5'-&gt;3')-adenylyl)]-L-tyrosyl-[protein] + diphosphate. Functionally, probable antitoxin component of a putative type VII toxin-antitoxin (TA) system. Neutralizes cognate toxic MJ1216 by di-AMPylation. This is Putative protein adenylyltransferase MJ1217 from Methanocaldococcus jannaschii (strain ATCC 43067 / DSM 2661 / JAL-1 / JCM 10045 / NBRC 100440) (Methanococcus jannaschii).